Reading from the N-terminus, the 208-residue chain is Octanoyltransferase (208 aa).

In terms of domain architecture, BPL/LPL catalytic spans Gly-31–Ala-208. Residues Arg-70–His-77, Ala-142–Gly-144, and Gly-155–Ala-157 contribute to the substrate site. The active-site Acyl-thioester intermediate is Cys-173.

This sequence belongs to the LipB family.

It localises to the cytoplasm. The enzyme catalyses octanoyl-[ACP] + L-lysyl-[protein] = N(6)-octanoyl-L-lysyl-[protein] + holo-[ACP] + H(+). The protein operates within protein modification; protein lipoylation via endogenous pathway; protein N(6)-(lipoyl)lysine from octanoyl-[acyl-carrier-protein]: step 1/2. Its function is as follows. Catalyzes the transfer of endogenously produced octanoic acid from octanoyl-acyl-carrier-protein onto the lipoyl domains of lipoate-dependent enzymes. Lipoyl-ACP can also act as a substrate although octanoyl-ACP is likely to be the physiological substrate. This Anaplasma phagocytophilum (strain HZ) protein is Octanoyltransferase.